Reading from the N-terminus, the 249-residue chain is MLYVVGIGSGNERHFTKEAEEILNKVDLIVCYKNYKKFVERLNKPIYTTGMTREIDRVDYALKEAKDKDVALVSSGDATIYGLASLAYEINAVKGYNVDIKVVPGITACSLASAILGSPLNHDFVVISFSDLLTPLETILKRFRCALEGDFVICIYNPLSKRRKEPFLKAMEILAEFAKDKDYIIGIVKNAGRNKEEVVITNFKDLYKNLEKYLEFIDMNTILIIGNSSTKIINGKMITPRGYLDKYKI.

The protein belongs to the precorrin methyltransferase family.

It carries out the reaction Co(II)-factor III + S-adenosyl-L-methionine + H(+) = Co(II)-factor IV + S-adenosyl-L-homocysteine. It participates in cofactor biosynthesis; adenosylcobalamin biosynthesis; cob(II)yrinate a,c-diamide from sirohydrochlorin (anaerobic route): step 3/10. Functionally, methyltransferase that likely catalyzes the ring contraction and methylation of C-17 in cobalt-factor III to form cobalt-factor IV. May also convert cobalt-precorrin-3 to cobalt-precorrin-4. The chain is Probable cobalt-factor III C(17)-methyltransferase (cbiH) from Methanocaldococcus jannaschii (strain ATCC 43067 / DSM 2661 / JAL-1 / JCM 10045 / NBRC 100440) (Methanococcus jannaschii).